Here is a 340-residue protein sequence, read N- to C-terminus: Guanine nucleotide-binding protein G(I)/G(S)/G(T) subunit beta-3 (340 aa).

7 WD repeats span residues 53-83 (GHLA…IVWD), 95-125 (LRSS…SIYS), 141-170 (AHTG…ALWD), 182-212 (GHTG…KLWD), 224-254 (GHES…RLFD), 268-298 (SIIC…NIWD), and 310-340 (GHDN…KVWN).

This sequence belongs to the WD repeat G protein beta family. G proteins are composed of 3 units, alpha, beta and gamma. Interacts with RASD2.

The protein localises to the cytoplasm. Its subcellular location is the perinuclear region. Its function is as follows. Guanine nucleotide-binding proteins (G proteins) are involved as a modulator or transducer in various transmembrane signaling systems. The beta and gamma chains are required for the GTPase activity, for replacement of GDP by GTP, and for G protein-effector interaction. The chain is Guanine nucleotide-binding protein G(I)/G(S)/G(T) subunit beta-3 (GNB3) from Canis lupus familiaris (Dog).